The chain runs to 412 residues: uncharacterized protein (412 aa).

11 helical membrane passes run 17-37 (LLLA…ELVI), 54-74 (VLAL…PLLV), 91-111 (MIFI…FFFL), 112-132 (GRAL…AVVG), 146-166 (LIVS…SFIG), 173-193 (WTFW…LLEM), 225-245 (VYIT…SFLG), 257-277 (TAAG…VITG), 299-319 (LLAC…SLFI), 346-366 (VMVF…ALMG), and 375-395 (AAVG…SVFA).

It belongs to the major facilitator superfamily.

It localises to the cell membrane. This is an uncharacterized protein from Bacillus subtilis (strain 168).